Consider the following 525-residue polypeptide: Glutamate--cysteine ligase (525 aa).

The protein belongs to the glutamate--cysteine ligase type 1 family. Type 1 subfamily.

The catalysed reaction is L-cysteine + L-glutamate + ATP = gamma-L-glutamyl-L-cysteine + ADP + phosphate + H(+). The protein operates within sulfur metabolism; glutathione biosynthesis; glutathione from L-cysteine and L-glutamate: step 1/2. This Hahella chejuensis (strain KCTC 2396) protein is Glutamate--cysteine ligase.